Consider the following 603-residue polypeptide: Protein regulator of cytokinesis 1 (603 aa).

Positions 1–341 (MRRSEVLADE…HLHDAEIVRL (341 aa)) are dimerization. 5 coiled-coil regions span residues 34-65 (EQRL…RERL), 96-136 (ILQL…DILC), 211-246 (SLEN…IREL), 272-304 (RNAL…LAQF), and 383-463 (GNLL…AEML). Residues 342–466 (RNYYDVHKEL…QTEAEMLYGS (125 aa)) are spectrin-fold. Basic and acidic residues predominate over residues 447-459 (KQERQLKNKKQTE). A disordered region spans residues 447–502 (KQERQLKNKKQTEAEMLYGSTPRTPSKRPGQTPKKSGKMNTTTMSSATPNSSIRPV). A unstructured, Arg/Lys rich region spans residues 467–603 (TPRTPSKRPG…RILNSTNIQS (137 aa)). Thr470 is subject to Phosphothreonine; by CDK1. Residues 484–499 (KMNTTTMSSATPNSSI) show a composition bias toward polar residues. Phosphoserine occurs at positions 510 and 568. The residue at position 575 (Thr575) is a Phosphothreonine. Positions 583 to 603 (LSKASRSDATSRILNSTNIQS) are disordered. Polar residues predominate over residues 589–603 (SDATSRILNSTNIQS). Thr599 carries the post-translational modification Phosphothreonine; by PLK1.

The protein belongs to the MAP65/ASE1 family. In terms of assembly, homodimer. Interacts with the C-terminal Rho-GAP domain and the basic region of RACGAP1. The interaction with RACGAP1 inhibits its GAP activity towards CDC42 in vitro, which may be required for maintaining normal spindle morphology. Interacts (via N-terminus) with the C-terminus of CENPE (via C-terminus); the interaction occurs during late mitosis. Interacts (via N-terminus) with KIF4A (via C-terminus); the interaction is required for the progression of mitosis. Interacts (via N-terminus) with KIF23 (via C-terminus); the interaction occurs during late mitosis. Interacts with KIF14 and KIF20A. Interacts with PLK1. Interacts with KIF20B. Interacts with CCDC66. Phosphorylation by CDK1 in early mitosis holds PRC1 in an inactive monomeric state, during the metaphase to anaphase transition, PRC1 is dephosphorylated, promoting interaction with KIF4A, which then translocates PRC1 along mitotic spindles to the plus ends of antiparallel interdigitating microtubules. Dephosphorylation also promotes MT-bundling activity by allowing dimerization. Phosphorylation by CDK1 prevents PLK1-binding: upon degradation of CDK1 at anaphase and dephosphorylation, it is then phosphorylated by PLK1, leading to cytokinesis.

The protein localises to the nucleus. Its subcellular location is the cytoplasm. It is found in the cytoskeleton. It localises to the spindle pole. The protein resides in the midbody. Its function is as follows. Key regulator of cytokinesis that cross-links antiparrallel microtubules at an average distance of 35 nM. Essential for controlling the spatiotemporal formation of the midzone and successful cytokinesis. Required for KIF14 localization to the central spindle and midbody. Required to recruit PLK1 to the spindle. Stimulates PLK1 phosphorylation of RACGAP1 to allow recruitment of ECT2 to the central spindle. Acts as an oncogene for promoting bladder cancer cells proliferation, apoptosis inhibition and carcinogenic progression. The sequence is that of Protein regulator of cytokinesis 1 from Mus musculus (Mouse).